The primary structure comprises 320 residues: Putative GDP-polyphosphate phosphotransferase PKK2A (320 aa).

Disordered regions lie at residues 1 to 21 (MRKKKDGQNLPDFRKNPPKLD), 246 to 267 (RPLPEIPHRPDSESDYVRPPRD), and 281 to 320 (EERIKKEEKAKKAKKPAKAAGKNSDKQKSSGGKGKKKSKK). Residues 12-21 (DFRKNPPKLD) are compositionally biased toward basic and acidic residues. A compositionally biased stretch (basic and acidic residues) spans 281–290 (EERIKKEEKA).

This sequence belongs to the polyphosphate kinase 2 (PPK2) family. Class I subfamily.

It carries out the reaction [phosphate](n) + GTP = [phosphate](n+1) + GDP. The chain is Putative GDP-polyphosphate phosphotransferase PKK2A from Corynebacterium glutamicum (strain ATCC 13032 / DSM 20300 / JCM 1318 / BCRC 11384 / CCUG 27702 / LMG 3730 / NBRC 12168 / NCIMB 10025 / NRRL B-2784 / 534).